The following is a 196-amino-acid chain: Carnitine operon protein CaiE (196 aa).

A disordered region spans residues Arg-177–Arg-196.

The protein belongs to the transferase hexapeptide repeat family.

It functions in the pathway amine and polyamine metabolism; carnitine metabolism. Functionally, overproduction of CaiE stimulates the activity of CaiB and CaiD. In Escherichia coli O17:K52:H18 (strain UMN026 / ExPEC), this protein is Carnitine operon protein CaiE.